A 380-amino-acid chain; its full sequence is tRNA-specific 2-thiouridylase MnmA (380 aa).

ATP-binding positions include 9–16 (GVSGGVDS) and Met-35. An interaction with target base in tRNA region spans residues 94 to 96 (NPD). Cys-99 acts as the Nucleophile in catalysis. Cys-99 and Cys-195 are oxidised to a cystine. Gly-123 lines the ATP pocket. Residues 145–147 (KDQ) form an interaction with tRNA region. Cys-195 (cysteine persulfide intermediate) is an active-site residue. The segment at 308 to 309 (RY) is interaction with tRNA.

The protein belongs to the MnmA/TRMU family.

It is found in the cytoplasm. It catalyses the reaction S-sulfanyl-L-cysteinyl-[protein] + uridine(34) in tRNA + AH2 + ATP = 2-thiouridine(34) in tRNA + L-cysteinyl-[protein] + A + AMP + diphosphate + H(+). Catalyzes the 2-thiolation of uridine at the wobble position (U34) of tRNA, leading to the formation of s(2)U34. This is tRNA-specific 2-thiouridylase MnmA from Stenotrophomonas maltophilia (strain K279a).